An 813-amino-acid chain; its full sequence is Leucine--tRNA ligase (813 aa).

The 'HIGH' region signature appears at 41 to 51; it reads PYPSGTLHMGH. Positions 575–579 match the 'KMSKS' region motif; that stretch reads KMSKS. K578 contacts ATP.

Belongs to the class-I aminoacyl-tRNA synthetase family.

It is found in the cytoplasm. The enzyme catalyses tRNA(Leu) + L-leucine + ATP = L-leucyl-tRNA(Leu) + AMP + diphosphate. This chain is Leucine--tRNA ligase, found in Francisella tularensis subsp. tularensis (strain FSC 198).